A 361-amino-acid chain; its full sequence is Chorismate synthase (361 aa).

NADP(+)-binding residues include Arg48 and Arg54. FMN-binding positions include 125 to 127 (RSS), 238 to 239 (NA), Gly278, 293 to 297 (KPTSS), and Arg319.

It belongs to the chorismate synthase family. As to quaternary structure, homotetramer. FMNH2 is required as a cofactor.

The catalysed reaction is 5-O-(1-carboxyvinyl)-3-phosphoshikimate = chorismate + phosphate. It functions in the pathway metabolic intermediate biosynthesis; chorismate biosynthesis; chorismate from D-erythrose 4-phosphate and phosphoenolpyruvate: step 7/7. Its function is as follows. Catalyzes the anti-1,4-elimination of the C-3 phosphate and the C-6 proR hydrogen from 5-enolpyruvylshikimate-3-phosphate (EPSP) to yield chorismate, which is the branch point compound that serves as the starting substrate for the three terminal pathways of aromatic amino acid biosynthesis. This reaction introduces a second double bond into the aromatic ring system. This is Chorismate synthase from Sodalis glossinidius (strain morsitans).